Reading from the N-terminus, the 106-residue chain is Iron-sulfur cluster assembly protein CyaY (106 aa).

Belongs to the frataxin family.

Functionally, involved in iron-sulfur (Fe-S) cluster assembly. May act as a regulator of Fe-S biogenesis. In Escherichia coli O7:K1 (strain IAI39 / ExPEC), this protein is Iron-sulfur cluster assembly protein CyaY.